A 172-amino-acid polypeptide reads, in one-letter code: 3-hydroxydecanoyl-[acyl-carrier-protein] dehydratase (172 aa).

His-71 is a catalytic residue.

This sequence belongs to the thioester dehydratase family. FabA subfamily. Homodimer.

It localises to the cytoplasm. The enzyme catalyses a (3R)-hydroxyacyl-[ACP] = a (2E)-enoyl-[ACP] + H2O. It carries out the reaction (3R)-hydroxydecanoyl-[ACP] = (2E)-decenoyl-[ACP] + H2O. The catalysed reaction is (2E)-decenoyl-[ACP] = (3Z)-decenoyl-[ACP]. Its pathway is lipid metabolism; fatty acid biosynthesis. Its function is as follows. Necessary for the introduction of cis unsaturation into fatty acids. Catalyzes the dehydration of (3R)-3-hydroxydecanoyl-ACP to E-(2)-decenoyl-ACP and then its isomerization to Z-(3)-decenoyl-ACP. Can catalyze the dehydratase reaction for beta-hydroxyacyl-ACPs with saturated chain lengths up to 16:0, being most active on intermediate chain length. The chain is 3-hydroxydecanoyl-[acyl-carrier-protein] dehydratase from Pseudoalteromonas atlantica (strain T6c / ATCC BAA-1087).